The primary structure comprises 394 residues: Phosphopentomutase (394 aa).

Mn(2+) contacts are provided by Asp-15, Asp-288, His-293, Asp-329, His-330, and His-341.

This sequence belongs to the phosphopentomutase family. Mn(2+) serves as cofactor.

It localises to the cytoplasm. The catalysed reaction is 2-deoxy-alpha-D-ribose 1-phosphate = 2-deoxy-D-ribose 5-phosphate. The enzyme catalyses alpha-D-ribose 1-phosphate = D-ribose 5-phosphate. The protein operates within carbohydrate degradation; 2-deoxy-D-ribose 1-phosphate degradation; D-glyceraldehyde 3-phosphate and acetaldehyde from 2-deoxy-alpha-D-ribose 1-phosphate: step 1/2. Isomerase that catalyzes the conversion of deoxy-ribose 1-phosphate (dRib-1-P) and ribose 1-phosphate (Rib-1-P) to deoxy-ribose 5-phosphate (dRib-5-P) and ribose 5-phosphate (Rib-5-P), respectively. This Bacillus licheniformis (strain ATCC 14580 / DSM 13 / JCM 2505 / CCUG 7422 / NBRC 12200 / NCIMB 9375 / NCTC 10341 / NRRL NRS-1264 / Gibson 46) protein is Phosphopentomutase.